A 115-amino-acid polypeptide reads, in one-letter code: NADH-ubiquinone oxidoreductase chain 3 (115 aa).

Helical transmembrane passes span 3–23 (LYTVIFINILLSLTLILVAFW), 55–75 (FFLVAITFLLFDLEIALLLPL), and 86–106 (TMMIMAFILVTILSLGLAYEW).

The protein belongs to the complex I subunit 3 family. In terms of assembly, core subunit of respiratory chain NADH dehydrogenase (Complex I) which is composed of 45 different subunits. Interacts with TMEM186. Interacts with TMEM242.

The protein localises to the mitochondrion inner membrane. It carries out the reaction a ubiquinone + NADH + 5 H(+)(in) = a ubiquinol + NAD(+) + 4 H(+)(out). Core subunit of the mitochondrial membrane respiratory chain NADH dehydrogenase (Complex I) which catalyzes electron transfer from NADH through the respiratory chain, using ubiquinone as an electron acceptor. Essential for the catalytic activity of complex I. This chain is NADH-ubiquinone oxidoreductase chain 3, found in Mus musculus (Mouse).